The following is a 186-amino-acid chain: MADSTPVRMPRAPKLRASCDECGAAKLKCDRGHPSCGRCISLGLKCVYGVSRKAGKPRRDAQSATRPPPTPGDSGPPLDYNSFGPTSPPSSVGDGATLASGLLPGAADLSPLDWGPGSSSSYRAVVDLCSRYAKEPMRMDDTAMSSVWDGFLEPSLFATYGSPVQVARLAGGSVPFSAAPVRDLPI.

Positions 19–46 (CDECGAAKLKCDRGHPSCGRCISLGLKC) form a DNA-binding region, zn(2)-C6 fungal-type. Positions 52-98 (RKAGKPRRDAQSATRPPPTPGDSGPPLDYNSFGPTSPPSSVGDGATL) are disordered.

It localises to the nucleus. Functionally, transcription factor that specifically regulates the expression of the pgm gene cluster that mediates the biosynthesis of cryptic naphthoquinones derived pigments responsible for the coloration of the fruiting bodies. The sequence is that of Transcription factor pgmR from Aspergillus terreus (strain NIH 2624 / FGSC A1156).